The sequence spans 405 residues: Fragilysin (405 aa).

A signal peptide spans 1 to 25 (MFILNFNKMKNVKLLLMLGTAALLA). His-356 serves as a coordination point for Zn(2+). Glu-357 is an active-site residue. The Zn(2+) site is built by His-360 and His-366.

This sequence belongs to the peptidase M10C family. Requires Zn(2+) as cofactor.

It is found in the secreted. It catalyses the reaction Broad proteolytic specificity, bonds hydrolyzed includes -Gly-|-Leu-, -Met-|-Leu-, -Phe-|-Leu-, -Cys-|-Leu-, -Leu-|-Gly-.. Diarrheal toxin that hydrolyzes gelatin, azocoll, actin, tropomyosin, and fibrinogen. This chain is Fragilysin (btfP), found in Bacteroides fragilis.